The primary structure comprises 271 residues: uncharacterized protein (271 aa).

In terms of domain architecture, AB hydrolase-1 spans Pro24–Pro124.

The protein belongs to the AB hydrolase superfamily.

This is an uncharacterized protein from Bacillus subtilis (strain 168).